Consider the following 769-residue polypeptide: MNRSDAYGYFRNQGREYVITTPRTPARWFNYLFNDTYYTEISQTGQGDSVAFRPHNRTLTRGFRYFYLKDLETGGTWSPLYQPLKTEPEAYECIHSLGTTEIRSVSQEIASSIHVFVPRAGQQEIWTVTLTNTGVKPRSLSLFTAFSLENGGVMGSKCQFDQESQILSSYSFPYHVTYGQKAGCDDHTNVVYVYPDYPADSYDCSQRAFFGGDDIYELPAAVQKGRCSGGQAEAENPLGALQQTITLEPGEQAVRHFVVGCASSLEEIRSSKAELAAKGYAVLLQETEDYWEGITGMFRVETPDDDVNAFMNIWLKKQIVMQTRTNRMSSYCPVRNQLQDALGYALVDPAGAAEYMISVLQGQERSGFIQQWIMTDGSPPKNLCLLKHTDGPVWLIICITALLNQCGDTELLQRQVGFKGSSDSATIYQHLLLAADYMAGETGAHGLCLMGDGDWNDPINGPGRLGRGESAWNTMALVYAIQALIPFCEQLGDTENAEQLNTVARRLADAVNRICWDGGWYVAGFDDDGTPFGTAQDEEGKLFLNTQTWAIMSGIASGERLDQCLAAIDSLDTPFGPRLLEPPFSGWNPKWGRISLKLAGTTENGSVYCHASMFKAFADCIAGRGSEAWQTISRTLPTNPDNPPGQNGQVPIFVPNYYFGLADSPNFGKSSHHVSTGTVGWMLWTTLEYALGIRATANGLKIDPCIPADWPEYTVERKYRSASYRIHVLNPSGISRGTVKVTVDGEAWMAAALPYEAGREYQVTVQLEQ.

Asp-457 acts as the Proton donor in catalysis.

Belongs to the glycosyl hydrolase 94 family. As to quaternary structure, homodimer.

It is found in the cytoplasm. The enzyme catalyses 3-O-beta-D-glucosyl-D-glucuronate + phosphate = aldehydo-D-glucuronate + alpha-D-glucose 1-phosphate. It catalyses the reaction a 3-O-beta-D-glucosyl-beta-D-glucuronoside + phosphate = a beta-D-glucuronoside + alpha-D-glucose 1-phosphate. In terms of biological role, glycoside phosphorylase that catalyzes the reversible phosphorolysis of 3-O-beta-D-glucosyl-D-glucuronate into D-glucuronic acid and alpha-D-glucose 1-phosphate. Cannot phosphorolyze cellobionic acid and laminaribiose. In the reverse direction, using alpha-D-glucose 1-phosphate as a donor substrate, the enzyme acts on D-glucuronate and its artificial derivative p-nitrophenyl-beta-D-glucuronide. The apparent catalytic efficiency towards p-nitrophenyl-beta-D-glucuronide is approximately 5-fold higher than that towards D-glucuronic acid. Is probably involved in the metabolism of oligosaccharides containing the 3-O-beta-D-glucopyranosyl-beta-D-glucuronide structure released from bacterial and plant acidic carbohydrates. In Paenibacillus borealis, this protein is 3-O-beta-D-glucopyranosyl-beta-D-glucuronide phosphorylase.